A 451-amino-acid polypeptide reads, in one-letter code: Phosphoglucosamine mutase (451 aa).

The active-site Phosphoserine intermediate is serine 101. Residues serine 101, aspartate 242, aspartate 244, and aspartate 246 each contribute to the Mg(2+) site. Serine 101 is modified (phosphoserine).

The protein belongs to the phosphohexose mutase family. Mg(2+) is required as a cofactor. Activated by phosphorylation.

The catalysed reaction is alpha-D-glucosamine 1-phosphate = D-glucosamine 6-phosphate. Functionally, catalyzes the conversion of glucosamine-6-phosphate to glucosamine-1-phosphate. In Beijerinckia indica subsp. indica (strain ATCC 9039 / DSM 1715 / NCIMB 8712), this protein is Phosphoglucosamine mutase.